The following is a 139-amino-acid chain: Cytochrome c-type biogenesis protein CcmE 2 (139 aa).

At 1 to 9 (MASLKKSRR) the chain is on the cytoplasmic side. Residues 10 to 30 (VRLILFSGVALVSATALIGYA) traverse the membrane as a helical; Signal-anchor for type II membrane protein segment. Residues 31–139 (MRDGIQFFRT…ELAEMEALRD (109 aa)) are Periplasmic-facing. Positions 122 and 126 each coordinate heme.

Belongs to the CcmE/CycJ family.

The protein resides in the cell inner membrane. Functionally, heme chaperone required for the biogenesis of c-type cytochromes. Transiently binds heme delivered by CcmC and transfers the heme to apo-cytochromes in a process facilitated by CcmF and CcmH. In Ruegeria pomeroyi (strain ATCC 700808 / DSM 15171 / DSS-3) (Silicibacter pomeroyi), this protein is Cytochrome c-type biogenesis protein CcmE 2.